A 244-amino-acid chain; its full sequence is 7-cyano-7-deazaguanine synthase (244 aa).

17–27 contacts ATP; that stretch reads FSGGQDSTTCL. Zn(2+) is bound by residues Cys-205, Cys-220, Cys-223, and Cys-226.

This sequence belongs to the QueC family. It depends on Zn(2+) as a cofactor.

The catalysed reaction is 7-carboxy-7-deazaguanine + NH4(+) + ATP = 7-cyano-7-deazaguanine + ADP + phosphate + H2O + H(+). It functions in the pathway purine metabolism; 7-cyano-7-deazaguanine biosynthesis. Functionally, catalyzes the ATP-dependent conversion of 7-carboxy-7-deazaguanine (CDG) to 7-cyano-7-deazaguanine (preQ(0)). This is 7-cyano-7-deazaguanine synthase from Bordetella pertussis (strain Tohama I / ATCC BAA-589 / NCTC 13251).